A 349-amino-acid polypeptide reads, in one-letter code: MDIKGALNRIVNQLDLTTEEMQAVMRQIMTGRCTDAQIGAFLMGMRMKSETIDEIVGAVAVMRELADGVQLPTLKHVVDVVGTGGDGANIFNVSSAASFVVAAAGGKVAKHGNRAVSGKSGSADLLEAAGIYLELTSEQVARCIDTVGVGFMFAQVHHKAMKYAAGPRRELGLRTLFNMLGPLTNPAGVRHQVVGVFTQELCKPLAEVLKRLGSEHVLVVHSRDGLDEFSLAAATHIAELKDGEVREYEVRPEDFGIKSQTLMGLEVDSPQASLELIRDALGRRKTEAGQKAAELIVMNAGPALYAADLATSLHEGIQLAHDALHTGLAREKMDELVAFTAVYREENAQ.

5-phospho-alpha-D-ribose 1-diphosphate contacts are provided by residues Gly82, Gly85 to Asp86, Asn92 to Ser95, Lys110 to Gly118, and Ser122. An anthranilate-binding site is contributed by Gly82. Position 94 (Ser94) interacts with Mg(2+). An anthranilate-binding site is contributed by Asn113. Arg168 is a binding site for anthranilate. Mg(2+) is bound by residues Asp227 and Glu228.

It belongs to the anthranilate phosphoribosyltransferase family. In terms of assembly, homodimer. Requires Mg(2+) as cofactor.

The catalysed reaction is N-(5-phospho-beta-D-ribosyl)anthranilate + diphosphate = 5-phospho-alpha-D-ribose 1-diphosphate + anthranilate. The protein operates within amino-acid biosynthesis; L-tryptophan biosynthesis; L-tryptophan from chorismate: step 2/5. In terms of biological role, catalyzes the transfer of the phosphoribosyl group of 5-phosphorylribose-1-pyrophosphate (PRPP) to anthranilate to yield N-(5'-phosphoribosyl)-anthranilate (PRA). The polypeptide is Anthranilate phosphoribosyltransferase (Pseudomonas paraeruginosa (strain DSM 24068 / PA7) (Pseudomonas aeruginosa (strain PA7))).